The sequence spans 241 residues: Carboxy-S-adenosyl-L-methionine synthase (241 aa).

Residues tyrosine 38, 63–65 (GCS), 88–89 (DN), 116–117 (DI), asparagine 131, and arginine 198 contribute to the S-adenosyl-L-methionine site.

The protein belongs to the class I-like SAM-binding methyltransferase superfamily. Cx-SAM synthase family. Homodimer.

The catalysed reaction is prephenate + S-adenosyl-L-methionine = carboxy-S-adenosyl-L-methionine + 3-phenylpyruvate + H2O. Functionally, catalyzes the conversion of S-adenosyl-L-methionine (SAM) to carboxy-S-adenosyl-L-methionine (Cx-SAM). In Haemophilus influenzae (strain ATCC 51907 / DSM 11121 / KW20 / Rd), this protein is Carboxy-S-adenosyl-L-methionine synthase.